The sequence spans 486 residues: UDP-N-acetylmuramoyl-L-alanyl-D-glutamate--2,6-diaminopimelate ligase (486 aa).

Ser-34 provides a ligand contact to UDP-N-acetyl-alpha-D-muramoyl-L-alanyl-D-glutamate. 112-118 serves as a coordination point for ATP; sequence GTAGKTS. Residues 154-155, Ser-181, Gln-187, and Arg-189 contribute to the UDP-N-acetyl-alpha-D-muramoyl-L-alanyl-D-glutamate site; that span reads TT. Lys-221 is modified (N6-carboxylysine). Meso-2,6-diaminopimelate contacts are provided by residues Arg-385, 409–412, Gly-457, and Glu-461; that span reads DNPR. The Meso-diaminopimelate recognition motif signature appears at 409-412; that stretch reads DNPR.

Belongs to the MurCDEF family. MurE subfamily. Mg(2+) serves as cofactor. In terms of processing, carboxylation is probably crucial for Mg(2+) binding and, consequently, for the gamma-phosphate positioning of ATP.

It is found in the cytoplasm. It catalyses the reaction UDP-N-acetyl-alpha-D-muramoyl-L-alanyl-D-glutamate + meso-2,6-diaminopimelate + ATP = UDP-N-acetyl-alpha-D-muramoyl-L-alanyl-gamma-D-glutamyl-meso-2,6-diaminopimelate + ADP + phosphate + H(+). It functions in the pathway cell wall biogenesis; peptidoglycan biosynthesis. Its function is as follows. Catalyzes the addition of meso-diaminopimelic acid to the nucleotide precursor UDP-N-acetylmuramoyl-L-alanyl-D-glutamate (UMAG) in the biosynthesis of bacterial cell-wall peptidoglycan. The protein is UDP-N-acetylmuramoyl-L-alanyl-D-glutamate--2,6-diaminopimelate ligase of Rhizobium meliloti (strain 1021) (Ensifer meliloti).